The sequence spans 141 residues: Nucleoside triphosphatase NudI (141 aa).

A Nudix hydrolase domain is found at 1–141 (MRQRTIVCPL…RKTLRLKGLL (141 aa)). Residues 38 to 59 (GGVESGERIEEALRREIREELG) carry the Nudix box motif.

Belongs to the Nudix hydrolase family. NudI subfamily. Monomer. Mg(2+) serves as cofactor.

It catalyses the reaction a ribonucleoside 5'-triphosphate + H2O = a ribonucleoside 5'-phosphate + diphosphate + H(+). The enzyme catalyses a 2'-deoxyribonucleoside 5'-triphosphate + H2O = a 2'-deoxyribonucleoside 5'-phosphate + diphosphate + H(+). It carries out the reaction dUTP + H2O = dUMP + diphosphate + H(+). The catalysed reaction is dTTP + H2O = dTMP + diphosphate + H(+). It catalyses the reaction dCTP + H2O = dCMP + diphosphate + H(+). Functionally, catalyzes the hydrolysis of nucleoside triphosphates, with a preference for pyrimidine deoxynucleoside triphosphates (dUTP, dTTP and dCTP). The protein is Nucleoside triphosphatase NudI of Shigella flexneri serotype 5b (strain 8401).